We begin with the raw amino-acid sequence, 305 residues long: 3-methyl-2-oxobutanoate hydroxymethyltransferase (305 aa).

Mg(2+) contacts are provided by Asp52 and Asp95. 3-methyl-2-oxobutanoate contacts are provided by residues Asp52–Ser53, Asp95, and Lys125. Glu127 is a Mg(2+) binding site. Residue Glu194 is the Proton acceptor of the active site.

This sequence belongs to the PanB family. In terms of assembly, homodecamer; pentamer of dimers. Requires Mg(2+) as cofactor.

It localises to the cytoplasm. The catalysed reaction is 3-methyl-2-oxobutanoate + (6R)-5,10-methylene-5,6,7,8-tetrahydrofolate + H2O = 2-dehydropantoate + (6S)-5,6,7,8-tetrahydrofolate. It participates in cofactor biosynthesis; (R)-pantothenate biosynthesis; (R)-pantoate from 3-methyl-2-oxobutanoate: step 1/2. Catalyzes the reversible reaction in which hydroxymethyl group from 5,10-methylenetetrahydrofolate is transferred onto alpha-ketoisovalerate to form ketopantoate. The chain is 3-methyl-2-oxobutanoate hydroxymethyltransferase from Anaeromyxobacter sp. (strain Fw109-5).